Reading from the N-terminus, the 336-residue chain is Coproporphyrin III ferrochelatase (336 aa).

Fe-coproporphyrin III-binding residues include Ser-52 and Tyr-116. Fe(2+)-binding residues include His-172 and Glu-255.

Belongs to the ferrochelatase family.

Its subcellular location is the cytoplasm. The enzyme catalyses Fe-coproporphyrin III + 2 H(+) = coproporphyrin III + Fe(2+). The protein operates within porphyrin-containing compound metabolism; protoheme biosynthesis. Involved in coproporphyrin-dependent heme b biosynthesis. Catalyzes the insertion of ferrous iron into coproporphyrin III to form Fe-coproporphyrin III. This is Coproporphyrin III ferrochelatase from Mycolicibacterium paratuberculosis (strain ATCC BAA-968 / K-10) (Mycobacterium paratuberculosis).